Here is a 588-residue protein sequence, read N- to C-terminus: MIQHPRIGIRPTIDGRRQGVRESLEVQTMNMAKSVADLISSTLKYPDGEPVECVISPSTIGRVPEAAASHELFKKSNVCATITVTPCWCYGSETMDMSPDIPHAIWGFNGTERPGAVYLAAVLASHAQKGIPAFGIYGRDVQEASDTAIPEDVKEKLLRYARAALATGLMRDTAYLSMGSVSMGIGGSIVNPDFFQEYLGMRNESVDMTEFTRRMDRGIYDPEEFERALKWVKENVKEGFDHNREDLVLSREEKDRQWEFVIKMFMIGRDLMVGNPRLAELGFEEEAVGHHALVAGFQGQRQWTDHFPNGDFMETFLNTQFDWNGIRKPFVFATENDSLNGVSMLFNYLLTNTPQIFADVRTYWSPEAVERVTGYTLEGRAAAGFLHLINSGSCTLDGTGQATRDGKPVMKPFWELDESEVQAMLENTDFPPANREYFRGGGFSTRFLTKGDMPVTMVRLNLLKGVGPVLQIAEGYTLELPEDVHHTLDNRTDPGWPTTWFAPRLTGKGAFKSVYDVMNNWGANHGAITYGHIGADLITLASMLRIPVNMHNVPEEDIFRPKNWSLFGTEDLESADYRACQLLGPLHK.

Residues Glu335 and Asp359 each act as proton acceptor in the active site. Mn(2+)-binding residues include Glu335, Asp359, and His525.

Belongs to the L-fucose isomerase family. The cofactor is Mn(2+).

It localises to the cytoplasm. It catalyses the reaction L-fucose = L-fuculose. It functions in the pathway carbohydrate degradation; L-fucose degradation; L-lactaldehyde and glycerone phosphate from L-fucose: step 1/3. Converts the aldose L-fucose into the corresponding ketose L-fuculose. The polypeptide is L-fucose isomerase (Streptococcus pneumoniae serotype 2 (strain D39 / NCTC 7466)).